Here is a 289-residue protein sequence, read N- to C-terminus: Phosphatidylserine decarboxylase proenzyme (289 aa).

Residues Asp89, His146, and Ser252 each act as charge relay system; for autoendoproteolytic cleavage activity in the active site. Ser252 serves as the catalytic Schiff-base intermediate with substrate; via pyruvic acid; for decarboxylase activity. Position 252 is a pyruvic acid (Ser); by autocatalysis (Ser252).

Belongs to the phosphatidylserine decarboxylase family. PSD-B subfamily. Prokaryotic type I sub-subfamily. In terms of assembly, heterodimer of a large membrane-associated beta subunit and a small pyruvoyl-containing alpha subunit. Pyruvate is required as a cofactor. Post-translationally, is synthesized initially as an inactive proenzyme. Formation of the active enzyme involves a self-maturation process in which the active site pyruvoyl group is generated from an internal serine residue via an autocatalytic post-translational modification. Two non-identical subunits are generated from the proenzyme in this reaction, and the pyruvate is formed at the N-terminus of the alpha chain, which is derived from the carboxyl end of the proenzyme. The autoendoproteolytic cleavage occurs by a canonical serine protease mechanism, in which the side chain hydroxyl group of the serine supplies its oxygen atom to form the C-terminus of the beta chain, while the remainder of the serine residue undergoes an oxidative deamination to produce ammonia and the pyruvoyl prosthetic group on the alpha chain. During this reaction, the Ser that is part of the protease active site of the proenzyme becomes the pyruvoyl prosthetic group, which constitutes an essential element of the active site of the mature decarboxylase.

The protein localises to the cell membrane. It catalyses the reaction a 1,2-diacyl-sn-glycero-3-phospho-L-serine + H(+) = a 1,2-diacyl-sn-glycero-3-phosphoethanolamine + CO2. It functions in the pathway phospholipid metabolism; phosphatidylethanolamine biosynthesis; phosphatidylethanolamine from CDP-diacylglycerol: step 2/2. Its function is as follows. Catalyzes the formation of phosphatidylethanolamine (PtdEtn) from phosphatidylserine (PtdSer). In Nitrosospira multiformis (strain ATCC 25196 / NCIMB 11849 / C 71), this protein is Phosphatidylserine decarboxylase proenzyme.